Here is a 709-residue protein sequence, read N- to C-terminus: Myotubularin-related protein 11 (709 aa).

Positions M1–S39 are disordered. Positions M196–Y639 constitute a Myotubularin phosphatase domain.

It belongs to the protein-tyrosine phosphatase family. Non-receptor class myotubularin subfamily. Expressed in bone marrow, spleen and thymus.

The polypeptide is Myotubularin-related protein 11 (MTMR11) (Homo sapiens (Human)).